The chain runs to 287 residues: PPP2R1A-PPP2R2A-interacting phosphatase regulator 1 (287 aa).

Positions 1-44 are disordered; sequence MAQEKMELDLELPPGTGGSPAEGGGSGGGGGLRRSNSAPLIHGL. The span at 15–32 shows a compositional bias: gly residues; it reads GTGGSPAEGGGSGGGGGL. Ser-35 carries the post-translational modification Phosphoserine. At Ser-37 the chain carries Phosphoserine; by CHEK1. Ser-45 bears the Phosphoserine mark. Thr-47 carries the post-translational modification Phosphothreonine. Residues Ser-48, Ser-62, and Ser-76 each carry the phosphoserine modification. Residue Lys-89 forms a Glycyl lysine isopeptide (Lys-Gly) (interchain with G-Cter in SUMO1) linkage. 2 positions are modified to phosphoserine: Ser-143 and Ser-147. Thr-149 carries the phosphothreonine modification. Disordered stretches follow at residues 167-189 and 236-287; these read SNGLPPSPIPSPTTRFTTRRSQS and GVCV…LSSK. 2 stretches are compositionally biased toward low complexity: residues 178 to 189 and 246 to 257; these read PTTRFTTRRSQS and GNSSSAGSSCNS. 2 positions are modified to phosphoserine: Ser-187 and Ser-189. Positions 259–270 are enriched in polar residues; sequence AKVSTTTDSPVS. A phosphoserine mark is found at Ser-267, Ser-270, and Ser-276.

It belongs to the FAM122 family. As to quaternary structure, interacts with PPP2CA and PPP2R1A. Interacts (via its N-terminus) with PPP2R2A; the interaction is direct and this interaction inhibits PP2A activity. The CHEK1-mediated Ser-37 phosphorylated form interacts with 14-3-3 proteins. Post-translationally, CHEK1-mediated phosphorylation at Ser-37 negatively regulates its ability to inhibit serine/threonine-protein phosphatase 2A (PP2A) activity. Phosphorylation leads to its release from the PP2A complex and its sequestration by 14-3-3 proteins in the cytoplasm resulting in its inability to translocate to the nucleus, where it otherwise inhibits PP2A.

The protein localises to the nucleus. It is found in the cytoplasm. Its function is as follows. Acts as an inhibitor of serine/threonine-protein phosphatase 2A (PP2A) activity. Inhibits PP2A activity by blocking the substrate binding site on PPP2R2A and the active site of PPP2CA. Potentiates ubiquitin-mediated proteasomal degradation of serine/threonine-protein phosphatase 2A catalytic subunit alpha (PPP2CA). Inhibits PP2A-mediated dephosphorylation of WEE1, promoting ubiquitin-mediated proteolysis of WEE1, thereby releasing G2/M checkpoint. The polypeptide is PPP2R1A-PPP2R2A-interacting phosphatase regulator 1 (Homo sapiens (Human)).